We begin with the raw amino-acid sequence, 113 residues long: Protein Asterix (113 aa).

A helical transmembrane segment spans residues 81–97; it reads IVSSFMLSVSAVVMSYL.

Belongs to the Asterix family.

It localises to the membrane. This Caenorhabditis elegans protein is Protein Asterix.